A 441-amino-acid chain; its full sequence is Transcriptional regulatory protein ZraR (441 aa).

A Response regulatory domain is found at 7 to 121 (DILVVDDDIS…NLQATLEKAL (115 aa)). The residue at position 56 (aspartate 56) is a 4-aspartylphosphate. The 230-residue stretch at 141–370 (MVGKSPAMQH…LENAVERAVV (230 aa)) folds into the Sigma-54 factor interaction domain. 4 residues coordinate ATP: glycine 172, threonine 173, arginine 329, and arginine 359. Residues 421-440 (KTEAARQLGITRKTLLAKLS) constitute a DNA-binding region (H-T-H motif).

Post-translationally, phosphorylated by ZraS.

The protein localises to the cytoplasm. Its activity is regulated as follows. Activity of the ZraS/ZraR two-component system is repressed by the zinc-bound form of ZraP, which probably interacts with the periplasmic region of ZraS. Functionally, part of the Zra signaling pathway, an envelope stress response (ESR) system composed of the periplasmic accessory protein ZraP, the histidine kinase ZraS and the transcriptional regulator ZraR. The ZraPSR system contributes to antibiotic resistance and is important for membrane integrity in the presence of membrane-targeting biocides. ZraR is a member of the two-component regulatory system ZraS/ZraR. When activated by ZraS, acts in conjunction with sigma-54 to regulate the expression of zraP in the presence of high Zn(2+) or Pb(2+) concentrations. Also positively autoregulates the expression of the zraSR operon. The chain is Transcriptional regulatory protein ZraR (zraR) from Escherichia coli O157:H7.